We begin with the raw amino-acid sequence, 51 residues long: MRDKIKLESSAGTGHFYTTTKNKRTMPEKMEIKKFDPVARKHVLYKETKLK.

The disordered stretch occupies residues 1–23 (MRDKIKLESSAGTGHFYTTTKNK). The span at 10 to 20 (SAGTGHFYTTT) shows a compositional bias: polar residues.

Belongs to the bacterial ribosomal protein bL33 family.

The polypeptide is Large ribosomal subunit protein bL33 (Chromobacterium violaceum (strain ATCC 12472 / DSM 30191 / JCM 1249 / CCUG 213 / NBRC 12614 / NCIMB 9131 / NCTC 9757 / MK)).